The primary structure comprises 567 residues: Urease subunit alpha (567 aa).

Positions 134, 136, and 217 each coordinate Ni(2+). An N6-carboxylysine modification is found at Lys217. A substrate-binding site is contributed by His219. His246 and His272 together coordinate Ni(2+). Residue His320 is the Proton donor of the active site. Asp360 serves as a coordination point for Ni(2+).

Belongs to the metallo-dependent hydrolases superfamily. Urease alpha subunit family. In terms of assembly, heterotrimer of UreA (gamma), UreB (beta) and UreC (alpha) subunits. Three heterotrimers associate to form the active enzyme. Requires Ni cation as cofactor. Carboxylation allows a single lysine to coordinate two nickel ions.

Its subcellular location is the cytoplasm. It catalyses the reaction urea + 2 H2O + H(+) = hydrogencarbonate + 2 NH4(+). Its pathway is nitrogen metabolism; urea degradation; CO(2) and NH(3) from urea (urease route): step 1/1. In Polynucleobacter asymbioticus (strain DSM 18221 / CIP 109841 / QLW-P1DMWA-1) (Polynucleobacter necessarius subsp. asymbioticus), this protein is Urease subunit alpha.